Here is a 98-residue protein sequence, read N- to C-terminus: U11-barytoxin-Tl1b (98 aa).

Residues 1–21 (MKTLVLVAVLGLASLYLLSYA) form the signal peptide. A propeptide spanning residues 22–50 (SEVQQLSRDEEEFRALVASFGGLFDTEER) is cleaved from the precursor. Intrachain disulfides connect Cys57–Cys71, Cys64–Cys76, and Cys70–Cys89.

The protein belongs to the neurotoxin 10 (Hwtx-1) family. 25 (ICK4) subfamily. As to expression, expressed by the venom gland.

The protein localises to the secreted. In terms of biological role, ion channel inhibitor. This is U11-barytoxin-Tl1b from Trittame loki (Brush-footed trapdoor spider).